Here is a 1074-residue protein sequence, read N- to C-terminus: KSPAMPVPGPMGPMGPRSGPQGFPGEAGAAGAMGPRGPAGPPGKNGEDGESGKPGRGGERGPPGPQGARGFPGTPGLPGMKGHRGFSGLDGAKGDSGPAGPKGESGAPGENGTPGAMGPRGLPGERGRTGAAGAAGARGNDGAAGAAGPPGPTGPAGPPGFPGGPGAKGDAGAQGGRGPEGPAGARGEPGNPGPAGAAGPSGNPGTDGAAGPKGTPGAAGVAGAPGFPGPRGPSGPQGAAGAPGPKGNTGEVGAPGAKGEAGAKGEAGAPGVQGPPGPSGEEGKRGARGEPGAAGARGAPGERGGPGGRGFPGSDGPAGPKGATGERGAPGAVGPKGSTGESGRGMTGSPGSPGPDGKTGPAGPSGQDGRPGPPGPVGARGQPGVMGFPGPKGAAGEGGKPGERGVMGPTGAAGAPGKDGDVGAPGPSGPAGPAGERGEQGPAGAPGFQGLPGPQGALGETGKPGEQGVPGEAGATGPAGARGDRGAPGALGPAGARGSPGSAGNDGAKGDAGAPGAPGAQGPPGLQGMPGERGAAGLPGLRGDRGDQGAKGADGAPGKDGPRGLTGPLGLPGPAGATGDKGEPGPAGPVGPGGARGAPGERGESGPPGPAGFAGPPGADGQPGAKGEAGDNGAKGDAGPPGAAGPTGAPGPQGPVGNTGPKGARGAAGPPGATGFPGAAGRVGPPGPSGNPGPPGPAGGTGKEGPKGNRGETGPAGRPGELGAAGPPGPAGEKGSPGSEGATGSAGLPGPQGLAGQRGLVGLPGQRGERGFSGLPGPAGEPGKPGPSGPGGERGPPGPMGPPGLAGAPGEPGREGSPGSEGSAGRDGAAGPKGDRGESGPSGAPGAPGPPGAPGPVGPAGKNGDRGETGPAGPAGSAGPAGPRGPAGAPGLRGDKGESGEAGERGHRGFTGMQGPPGPSGSSGEQGPAGAAGPAGPRGPAGSAGSPGKDGMSGLPGPTGPPGPRGRSGEMGPAGPPGPPGPPGAPGAPGGGFDLGFLSQPQEKAPDPYRDRDLEVDSTLKSLSQQLEQLRSPDGTRFTYSVLEDGCTSHTGTWGKVGAPDQEFGLEVGPVCFL.

A compositionally biased stretch (pro residues) spans 1–13 (KSPAMPVPGPMGP). The disordered stretch occupies residues 1 to 1010 (KSPAMPVPGP…PQEKAPDPYR (1010 aa)). The segment covering 14 to 36 (MGPRSGPQGFPGEAGAAGAMGPR) has biased composition (low complexity). The segment covering 45–59 (NGEDGESGKPGRGGE) has biased composition (basic and acidic residues). The span at 129 to 147 (TGAAGAAGARGNDGAAGAA) shows a compositional bias: low complexity. Residues 149–162 (PPGPTGPAGPPGFP) are compositionally biased toward pro residues. Positions 163-181 (GGPGAKGDAGAQGGRGPEG) are enriched in gly residues. Low complexity-rich tracts occupy residues 182–225 (PAGA…AGAP), 234–272 (SGPQ…APGV), and 290–299 (EPGAAGARGA). Over residues 301–313 (GERGGPGGRGFPG) the composition is skewed to gly residues. 3 stretches are compositionally biased toward low complexity: residues 377–392 (VGAR…PGPK), 469–530 (VPGE…QGMP), and 563–578 (RGLT…AGAT). Gly residues predominate over residues 588-597 (GPVGPGGARG). 2 stretches are compositionally biased toward low complexity: residues 611–647 (AGFA…AGPT) and 661–683 (PKGA…AGRV). Pro residues predominate over residues 685–697 (PPGPSGNPGPPGP). Composition is skewed to low complexity over residues 715-742 (PAGR…SEGA) and 803-823 (PGLA…SEGS). The span at 847–857 (APGPPGAPGPV) shows a compositional bias: pro residues. A compositionally biased stretch (low complexity) spans 871-890 (PAGPAGSAGPAGPRGPAGAP). Over residues 893–907 (RGDKGESGEAGERGH) the composition is skewed to basic and acidic residues. Low complexity predominate over residues 920–956 (SGSSGEQGPAGAAGPAGPRGPAGSAGSPGKDGMSGLP). Residues 974–986 (AGPPGPPGPPGAP) are compositionally biased toward pro residues. Positions 1014–1074 (LEVDSTLKSL…GLEVGPVCFL (61 aa)) constitute a Fibrillar collagen NC1 domain.

This sequence belongs to the fibrillar collagen family.

It localises to the secreted. The protein resides in the extracellular space. Its subcellular location is the extracellular matrix. This chain is Collagen, type I, alpha 1a, found in Epinephelus marginatus (Dusky grouper).